The chain runs to 260 residues: Snake venom serine protease KN14 (260 aa).

An N-terminal signal peptide occupies residues 1–18 (MVLIRVLANLLILQLSYA). Residues 19–24 (QKSSEL) constitute a propeptide that is removed on maturation. The region spanning 25 to 251 (VIGGDECNIN…HLDWIQSIIA (227 aa)) is the Peptidase S1 domain. 5 disulfides stabilise this stretch: Cys-31–Cys-165, Cys-100–Cys-258, Cys-144–Cys-212, Cys-176–Cys-191, and Cys-202–Cys-227. Residue His-67 is the Charge relay system of the active site. N-linked (GlcNAc...) asparagine glycosylation occurs at Asn-105. The active-site Charge relay system is Asp-112. Asn-172 is a glycosylation site (N-linked (GlcNAc...) asparagine). The active-site Charge relay system is the Ser-206. Residues Asn-213 and Asn-255 are each glycosylated (N-linked (GlcNAc...) asparagine).

The protein belongs to the peptidase S1 family. Snake venom subfamily. As to quaternary structure, monomer. Expressed by the venom gland.

It is found in the secreted. Snake venom serine protease that may act in the hemostasis system of the prey. This chain is Snake venom serine protease KN14, found in Trimeresurus stejnegeri (Chinese green tree viper).